Here is a 1004-residue protein sequence, read N- to C-terminus: Zinc finger protein 316 (1004 aa).

Residues 1–148 form a disordered region; sequence MAALHTTPDS…EEEEDEDEDD (148 aa). N-acetylalanine is present on Ala-2. Thr-7 is modified (phosphothreonine). At Ser-10 the chain carries Phosphoserine. The span at 21-60 shows a compositional bias: acidic residues; it reads GSECDPDQEEEEEEEEKGEEVQEVEEEEEEIVVEEEEEGV. Low complexity predominate over residues 61-72; sequence AEVVQDAQVEAV. A compositionally biased stretch (acidic residues) spans 73-95; that stretch reads AEVEVEADVEEEDVKEVLAEEEC. At Ser-112 the chain carries Phosphoserine. Acidic residues predominate over residues 132-148; the sequence is EDLEEEEEEEEDEDEDD. One can recognise a KRAB domain in the interval 158–229; that stretch reads VTFEDVAVYF…DSPRPEEGDI (72 aa). 5 C2H2-type zinc fingers span residues 345–367, 373–395, 401–423, 429–451, and 457–479; these read TTCD…QRYH, FGCE…QRTH, FPCP…RRIH, YRCA…QRTH, and YPCS…QAVH. The segment at 485 to 512 adopts a C2H2-type 6; degenerate zinc-finger fold; the sequence is HCCPDCGQAFRLRADFQRHRRGGGCAEA. The interval 508–574 is disordered; sequence GCAEAGGDGP…TPSGKVDPAP (67 aa). Acidic residues predominate over residues 531 to 557; it reads EDTDPGPEGSEVGEADGEAEAAAEERE. 5 C2H2-type zinc fingers span residues 691–713, 719–741, 747–769, 775–797, and 803–825; these read WICS…QRYH, HRCA…RRTH, FPCP…VRGH, FVCG…GRAH, and YACG…QWAH. A Glycyl lysine isopeptide (Lys-Gly) (interchain with G-Cter in SUMO2) cross-link involves residue Lys-829. 4 C2H2-type zinc fingers span residues 831-853, 859-881, 887-909, and 915-937; these read HRCP…RRTH, FRCA…RRGH, FPCP…QRTH, and YACA…MKTH. A disordered region spans residues 936-976; it reads THRGATAAPGSGSAPAPAPKPEAAAKGPSSAGPGERGSALL. The span at 939-968 shows a compositional bias: low complexity; the sequence is GATAAPGSGSAPAPAPKPEAAAKGPSSAGP. Lys-955 participates in a covalent cross-link: Glycyl lysine isopeptide (Lys-Gly) (interchain with G-Cter in SUMO2).

The protein belongs to the krueppel C2H2-type zinc-finger protein family.

Its subcellular location is the nucleus. In terms of biological role, may be involved in transcriptional regulation. The chain is Zinc finger protein 316 (ZNF316) from Homo sapiens (Human).